The following is a 342-amino-acid chain: MKVEDFDFDLPEELIAQTPLLDRTSSRLMVLDKKSGDIKDQHFTDIISYLNEGDALVLNDTRVLPARLHGIKDETGAHIEVLLLKQKEGNAWETLVKPAKRIRKGATITFGDGALKAICLEELEHGGRILEFSYEGIFYEVLEQLGEMPLPPYIKEQLADQDRYQTVYAKENGSAAAPTAGLHFTEDLLAKISAKGVEIIFVTLHVGLGTFRPVDVEDTANHKMHSEFYRLTEESAERINKIKAQGGKVVAVGTTSIRTLETIASRHDGKLVAESGWTEIFISPGYTFQAVDALITNFHLPKSTLIMLVSALSDRTKILAAYNHAVEEQYRFFSFGDAMFIH.

Belongs to the QueA family. As to quaternary structure, monomer.

It localises to the cytoplasm. The enzyme catalyses 7-aminomethyl-7-carbaguanosine(34) in tRNA + S-adenosyl-L-methionine = epoxyqueuosine(34) in tRNA + adenine + L-methionine + 2 H(+). It functions in the pathway tRNA modification; tRNA-queuosine biosynthesis. In terms of biological role, transfers and isomerizes the ribose moiety from AdoMet to the 7-aminomethyl group of 7-deazaguanine (preQ1-tRNA) to give epoxyqueuosine (oQ-tRNA). This Listeria monocytogenes serotype 4b (strain CLIP80459) protein is S-adenosylmethionine:tRNA ribosyltransferase-isomerase.